The sequence spans 390 residues: Purine permease 21 (390 aa).

Residues 12-34 (QQGKEPIPTDQDERSSVSGSQTK) are disordered. Helical transmembrane passes span 44-64 (WLRV…ATIL), 78-98 (LATV…LLSV), 118-138 (LVYI…SIGL), 140-160 (YLPV…TAFF), 169-189 (LTPI…LLAF), 204-224 (YVKG…LLSL), 241-261 (VINM…VGLF), 287-307 (LVWT…LIFE), 312-332 (FSNA…VIIF), and 336-356 (MNGL…SYVY). The tract at residues 367–390 (KSNEIPTTESPDRPEAEGSSEQSK) is disordered.

The protein belongs to the purine permeases (TC 2.A.7.14) family. In terms of tissue distribution, expressed in mesophyll cells.

The protein resides in the membrane. This is Purine permease 21 from Arabidopsis thaliana (Mouse-ear cress).